A 1032-amino-acid polypeptide reads, in one-letter code: Phosphoenolpyruvate carboxylase 4 (1032 aa).

The active site involves histidine 154. The tract at residues proline 377–glycine 407 is disordered. The span at glycine 398–glycine 407 shows a compositional bias: polar residues. Residue lysine 699 is part of the active site.

The protein belongs to the PEPCase type 1 family. In terms of assembly, homotetramer. Mg(2+) serves as cofactor. As to expression, expressed at low levels in flowers and siliques, and detectable in roots.

It is found in the cytoplasm. It carries out the reaction oxaloacetate + phosphate = phosphoenolpyruvate + hydrogencarbonate. Through the carboxylation of phosphoenolpyruvate (PEP) it forms oxaloacetate, a four-carbon dicarboxylic acid source for the tricarboxylic acid cycle. This chain is Phosphoenolpyruvate carboxylase 4 (PPC4), found in Arabidopsis thaliana (Mouse-ear cress).